We begin with the raw amino-acid sequence, 442 residues long: D-serine dehydratase (442 aa).

An N6-(pyridoxal phosphate)lysine modification is found at Lys118.

It belongs to the serine/threonine dehydratase family. DsdA subfamily. As to quaternary structure, monomer. The cofactor is pyridoxal 5'-phosphate.

The catalysed reaction is D-serine = pyruvate + NH4(+). In Escherichia coli (strain K12 / MC4100 / BW2952), this protein is D-serine dehydratase.